We begin with the raw amino-acid sequence, 1050 residues long: Valine--tRNA ligase (1050 aa).

Over residues 37-57 (EKKAAASDKPVKEAKAKKEQT) the composition is skewed to basic and acidic residues. A disordered region spans residues 37 to 72 (EKKAAASDKPVKEAKAKKEQTVEAAEPVDQTPTGQR). The 'HIGH' region signature appears at 127-137 (PNVTGNLHVGH). A 'KMSKS' region motif is present at residues 642–646 (KMSKS). Position 645 (lysine 645) interacts with ATP.

The protein belongs to the class-I aminoacyl-tRNA synthetase family.

It catalyses the reaction tRNA(Val) + L-valine + ATP = L-valyl-tRNA(Val) + AMP + diphosphate. In Caenorhabditis elegans, this protein is Valine--tRNA ligase.